The chain runs to 862 residues: Linoleate 9S-lipoxygenase 1 (862 aa).

A PLAT domain is found at 44-171 (FGAATDIVGG…SYKRDRIFFA (128 aa)). Residues 174 to 862 (TYLPNETPAS…FRGIPNSISI (689 aa)) form the Lipoxygenase domain. The tract at residues 225–257 (KNLARTTLGGSSDFPYPRRGRTGRKSTRKDPKC) is disordered. A compositionally biased stretch (basic residues) spans 242–251 (RRGRTGRKST). The Fe cation site is built by His522, His527, His713, Asn717, and Ile862.

The protein belongs to the lipoxygenase family. Monomer. The cofactor is Fe cation.

The protein resides in the cytoplasm. It carries out the reaction (9Z,12Z)-octadecadienoate + O2 = (13S)-hydroperoxy-(9Z,11E)-octadecadienoate. The catalysed reaction is (9Z,12Z,15Z)-octadecatrienoate + O2 = (13S)-hydroperoxy-(9Z,11E,15Z)-octadecatrienoate. It catalyses the reaction (9Z,12Z)-octadecadienoate + O2 = (9S)-hydroperoxy-(10E,12Z)-octadecadienoate. The protein operates within lipid metabolism; oxylipin biosynthesis. In terms of biological role, plant lipoxygenase may be involved in a number of diverse aspects of plant physiology including growth and development, pest resistance, and senescence or responses to wounding. It catalyzes the hydroperoxidation of lipids containing a cis,cis-1,4-pentadiene structure. The polypeptide is Linoleate 9S-lipoxygenase 1 (LOXA) (Phaseolus vulgaris (Kidney bean)).